Consider the following 390-residue polypeptide: 1-deoxy-D-xylulose 5-phosphate reductoisomerase (390 aa).

NADPH-binding residues include threonine 10, glycine 11, serine 12, isoleucine 13, glycine 36, arginine 37, asparagine 38, and asparagine 121. Lysine 122 is a binding site for 1-deoxy-D-xylulose 5-phosphate. Position 123 (glutamate 123) interacts with NADPH. Aspartate 147 is a binding site for Mn(2+). 4 residues coordinate 1-deoxy-D-xylulose 5-phosphate: serine 148, glutamate 149, serine 173, and histidine 196. Mn(2+) is bound at residue glutamate 149. Glycine 202 provides a ligand contact to NADPH. 1-deoxy-D-xylulose 5-phosphate contacts are provided by serine 209, asparagine 214, lysine 215, and glutamate 218. Position 218 (glutamate 218) interacts with Mn(2+). The interval 367–390 is disordered; it reads AASEHGRREAEKRVGARAHAPAGR. Basic and acidic residues predominate over residues 370 to 380; it reads EHGRREAEKRV.

Belongs to the DXR family. Mg(2+) serves as cofactor. Mn(2+) is required as a cofactor.

It carries out the reaction 2-C-methyl-D-erythritol 4-phosphate + NADP(+) = 1-deoxy-D-xylulose 5-phosphate + NADPH + H(+). It participates in isoprenoid biosynthesis; isopentenyl diphosphate biosynthesis via DXP pathway; isopentenyl diphosphate from 1-deoxy-D-xylulose 5-phosphate: step 1/6. Its function is as follows. Catalyzes the NADPH-dependent rearrangement and reduction of 1-deoxy-D-xylulose-5-phosphate (DXP) to 2-C-methyl-D-erythritol 4-phosphate (MEP). This chain is 1-deoxy-D-xylulose 5-phosphate reductoisomerase, found in Anaeromyxobacter sp. (strain K).